A 146-amino-acid chain; its full sequence is D-aminoacyl-tRNA deacylase (146 aa).

A Gly-cisPro motif, important for rejection of L-amino acids motif is present at residues 137–138; it reads GP.

The protein belongs to the DTD family. Homodimer.

The protein localises to the cytoplasm. The catalysed reaction is glycyl-tRNA(Ala) + H2O = tRNA(Ala) + glycine + H(+). It carries out the reaction a D-aminoacyl-tRNA + H2O = a tRNA + a D-alpha-amino acid + H(+). An aminoacyl-tRNA editing enzyme that deacylates mischarged D-aminoacyl-tRNAs. Also deacylates mischarged glycyl-tRNA(Ala), protecting cells against glycine mischarging by AlaRS. Acts via tRNA-based rather than protein-based catalysis; rejects L-amino acids rather than detecting D-amino acids in the active site. By recycling D-aminoacyl-tRNA to D-amino acids and free tRNA molecules, this enzyme counteracts the toxicity associated with the formation of D-aminoacyl-tRNA entities in vivo and helps enforce protein L-homochirality. This chain is D-aminoacyl-tRNA deacylase, found in Anoxybacillus flavithermus (strain DSM 21510 / WK1).